The following is a 335-amino-acid chain: Phospho-N-acetylmuramoyl-pentapeptide-transferase (335 aa).

Helical transmembrane passes span 2-22, 55-75, 77-97, 118-137, 153-173, 193-213, 238-258, 263-283, and 313-333; these read PPLFCVLKAFFIGLVVSLILV, IPTAGGIIFVLSVVLSILLLL, CNLWSTWFLVGATLLWGALGW, FFIQNCLAIGTVLPIMIAYG, LPHCWLGYLFSFSIAVLAIVG, VIACLGMLIVTFAYGAPWAFI, IFMGDTGSLFLGGMLGICAVL, FMLLFMGGIFVLESLSVILQV, and VVRNFWIIEFLCVAIGIFAVF.

The protein belongs to the glycosyltransferase 4 family. MraY subfamily. Mg(2+) serves as cofactor.

It localises to the cell inner membrane. The enzyme catalyses UDP-N-acetyl-alpha-D-muramoyl-L-alanyl-gamma-D-glutamyl-meso-2,6-diaminopimeloyl-D-alanyl-D-alanine + di-trans,octa-cis-undecaprenyl phosphate = di-trans,octa-cis-undecaprenyl diphospho-N-acetyl-alpha-D-muramoyl-L-alanyl-D-glutamyl-meso-2,6-diaminopimeloyl-D-alanyl-D-alanine + UMP. The protein operates within cell wall biogenesis; peptidoglycan biosynthesis. In terms of biological role, catalyzes the initial step of the lipid cycle reactions in the biosynthesis of the cell wall peptidoglycan: transfers peptidoglycan precursor phospho-MurNAc-pentapeptide from UDP-MurNAc-pentapeptide onto the lipid carrier undecaprenyl phosphate, yielding undecaprenyl-pyrophosphoryl-MurNAc-pentapeptide, known as lipid I. This is Phospho-N-acetylmuramoyl-pentapeptide-transferase from Chlamydia muridarum (strain MoPn / Nigg).